Reading from the N-terminus, the 367-residue chain is NADH-ubiquinone oxidoreductase chain 1 (367 aa).

The next 10 membrane-spanning stretches (helical) occupy residues 5 to 25 (IIISLIEVVLVLVPALLGIAY), 43 to 63 (PNFVGYYGLLQAFADALKLLL), 74 to 94 (IILFFLGPVITLIFSLLGYAV), 108 to 128 (LGIYYILAVSSLATYGILLAG), 152 to 172 (LVLSSAILLVIMLTGSLNLSV), 179 to 199 (AIWNIFPLLPVFIIFFIGSVA), 225 to 245 (AVVFVFFFLAEYGSIVLMCIL), 265 to 285 (FFYSILFNIGFIDLNFFNIFY), 301 to 321 (LIYGLTIGLKSSILIFLFIWV), and 336 to 356 (FCWTVLLPLLFALIVLLPCIL).

The protein belongs to the complex I subunit 1 family.

It is found in the mitochondrion inner membrane. It carries out the reaction a ubiquinone + NADH + 5 H(+)(in) = a ubiquinol + NAD(+) + 4 H(+)(out). In terms of biological role, core subunit of the mitochondrial membrane respiratory chain NADH dehydrogenase (Complex I) that is believed to belong to the minimal assembly required for catalysis. Complex I functions in the transfer of electrons from NADH to the respiratory chain. The immediate electron acceptor for the enzyme is believed to be ubiquinone. This Podospora anserina (strain S / ATCC MYA-4624 / DSM 980 / FGSC 10383) (Pleurage anserina) protein is NADH-ubiquinone oxidoreductase chain 1 (ND1).